The following is a 354-amino-acid chain: 4-hydroxy-2-oxovalerate aldolase 5 (354 aa).

Positions 11–263 (VTVHDMCLRD…ETGCDLFKLM (253 aa)) constitute a Pyruvate carboxyltransferase domain. 19–20 (RD) serves as a coordination point for substrate. D20 is a Mn(2+) binding site. H23 (proton acceptor) is an active-site residue. Substrate-binding residues include S173 and H202. The Mn(2+) site is built by H202 and H204. Residue Y293 participates in substrate binding.

Belongs to the 4-hydroxy-2-oxovalerate aldolase family.

It carries out the reaction (S)-4-hydroxy-2-oxopentanoate = acetaldehyde + pyruvate. This Dechloromonas aromatica (strain RCB) protein is 4-hydroxy-2-oxovalerate aldolase 5.